Consider the following 110-residue polypeptide: MAGWFELSKSSDNQFRFVLKAGNGETILTSELYTSKASAEKGIASVRSNSPQEERYEKKTASNGKFYFNLKAANHQIIGSSQMYATAQSRETGIASVKVNGTSQTVKDNT.

Tandem repeats lie at residues S10–K58 and A61–N109.

It belongs to the UPF0339 family. Duplicated subfamily.

The protein is UPF0339 protein YegP (yegP) of Escherichia coli O6:H1 (strain CFT073 / ATCC 700928 / UPEC).